Reading from the N-terminus, the 174-residue chain is Adenine phosphoribosyltransferase (174 aa).

Belongs to the purine/pyrimidine phosphoribosyltransferase family. Homodimer.

Its subcellular location is the cytoplasm. It carries out the reaction AMP + diphosphate = 5-phospho-alpha-D-ribose 1-diphosphate + adenine. The protein operates within purine metabolism; AMP biosynthesis via salvage pathway; AMP from adenine: step 1/1. Functionally, catalyzes a salvage reaction resulting in the formation of AMP, that is energically less costly than de novo synthesis. This chain is Adenine phosphoribosyltransferase, found in Agathobacter rectalis (strain ATCC 33656 / DSM 3377 / JCM 17463 / KCTC 5835 / VPI 0990) (Eubacterium rectale).